Consider the following 837-residue polypeptide: Protein ROD1 (837 aa).

A phosphoserine mark is found at Ser138 and Ser141. Lys401 participates in a covalent cross-link: Glycyl lysine isopeptide (Lys-Gly) (interchain with G-Cter in ubiquitin). Ser436 carries the phosphoserine modification. A PY-motif motif is present at residues 487–490 (PPNY). Ser536 carries the post-translational modification Phosphoserine. The short motif at 656–659 (PPAY) is the PY-motif element. Disordered regions lie at residues 675 to 726 (ERPQ…SVSL) and 763 to 837 (SFTS…RDRS). The segment covering 685–703 (TSSLLPLPGSSKSSNNLKR) has biased composition (low complexity). Positions 716 to 726 (PRNNSGSSVSL) are enriched in polar residues. Phosphoserine is present on residues Ser720 and Ser725. Low complexity predominate over residues 763 to 773 (SFTSNSSSKNN). Positions 774 to 792 (SHFDKTDSTSDANKPREEE) are enriched in basic and acidic residues. The segment covering 805 to 815 (SSSVRSNNSNS) has biased composition (low complexity).

This sequence belongs to the arrestin family. As to quaternary structure, interacts with RSP5 via its 2 PY-motifs.

It localises to the membrane. In terms of biological role, mediates resistance to o-dinitrobenzene, calcium and zinc. The chain is Protein ROD1 (ROD1) from Saccharomyces cerevisiae (strain ATCC 204508 / S288c) (Baker's yeast).